A 101-amino-acid chain; its full sequence is Urease subunit beta (101 aa).

The protein belongs to the urease beta subunit family. In terms of assembly, heterotrimer of UreA (gamma), UreB (beta) and UreC (alpha) subunits. Three heterotrimers associate to form the active enzyme.

It is found in the cytoplasm. The enzyme catalyses urea + 2 H2O + H(+) = hydrogencarbonate + 2 NH4(+). The protein operates within nitrogen metabolism; urea degradation; CO(2) and NH(3) from urea (urease route): step 1/1. The sequence is that of Urease subunit beta from Burkholderia thailandensis (strain ATCC 700388 / DSM 13276 / CCUG 48851 / CIP 106301 / E264).